We begin with the raw amino-acid sequence, 439 residues long: L-tryptophan decarboxylase (439 aa).

It belongs to the phosphatidylserine decarboxylase family.

The enzyme catalyses L-tryptophan + H(+) = tryptamine + CO2. Its pathway is secondary metabolite biosynthesis. In terms of biological role, L-tryptophan decarboxylase; part of the gene cluster that mediates the biosynthesis of psilocybin, a psychotropic tryptamine-derived natural product. The first step in the pathway is the decarboxylation of L-tryptophan to tryptamine by the decarboxylase psiD. 4-hydroxy-L-tryptophan is accepted as substrate by psiD as well. The cytochrome P450 monooxygenase psiH then converts tryptamine to 4-hydroxytryptamine. The kinase psiK catalyzes the 4-O-phosphorylation step by converting 4-hydroxytryptamine into norbaeocystin. The methyltransferase psiM then catalyzes iterative methyl transfer to the amino group of norbaeocystin to yield psilocybin via a monomethylated intermediate, baeocystin. 4-hydroxy-6-methyl-l-tryptophancan also be converted the decarboxylase PsiD, kinase PsiK, and methyltransferase PsiM into respectively 6-methyl-norbaeocystin, 6-methylbaeocystin, and 6-methylpsilocybin. In Psilocybe cubensis (Psychedelic mushroom), this protein is L-tryptophan decarboxylase.